Reading from the N-terminus, the 127-residue chain is MORF4 family-associated protein 1 (127 aa).

Positions 76–97 (ESALNHLQNPDDGAEGRGTKRC) are disordered. Residues 92-126 (RGTKRCEKAEEKAKEIAKMAEMLVELVRRIEKSES) are a coiled coil.

The protein belongs to the MORF4 family-associated protein family. Found in a complex composed of MORF4L1, MRFAP1 and RB1. Interacts via its N-terminus with MORF4L1. Interacts with CSTB and MORF4L2.

The protein localises to the nucleus. It localises to the cytoplasm. It is found in the perinuclear region. The polypeptide is MORF4 family-associated protein 1 (Bos taurus (Bovine)).